Here is a 1859-residue protein sequence, read N- to C-terminus: MEIENEQICTCIAQILHLLNSLIITFLDDDKTETGQSFVYIDGFLVKKHNNQHTIVNFETYKNKMKVSDRRKFEKANFDEFESALNNKNDLVHCPSITLFESIPTEVRSFYEDEKSGLIKVVKFRTGAMDRKRSFEKIVVSVMVGKNVQKFLTFVEDEPDFQGGPIPSKYLIPKKINLMVYTLFQVHTLKFNRKDYDTLSLFYLNRGYYNELSFRVLERCYEIASARPNDSSTMRTFTDFVSGTPIVRGLQKSTIRKYGYNLAPYMFLLLHVDELSIFSAYQASLPGEKKVDTERLKRDLCPRKPTEIKYFSQICNDMMNKKDRLGDILHIILRACALNFGAGPRGGAGDEEDRSITNEEPIIPSVDEHGLKVCKLRSPNTPRRLRKTLDAVKALLVSSCACTARDLDIFDDNNGVAMWKWIKILYHEVAQETALKDSYRITLVPSSDGVSVCGKLFNREYVRGFYFACKAQFDNLWEELNDCFYMPTVVDIASLILRNREVLFREPKRGIDEYLENDSFLQMIPVKYREIVLPKLRRDTNKMTAALKNKVTVAIDELTVPLMWMIHFAVGYPYRYPELQLLAFAGPQRNVYVDDTTRRIQLYTDYNKNGSSEPRLKTLDGLTSDYVFYFVTVLRQMQICALGNSYDAFNHDPWMDVVGFEDPDQVTNRDISRIVLYSYMFLNTAKGCLVEYATFRQYMRELPKNAPQKLNFREMRQGLIALGRHCVGSRFETDLYESATSELMANHSVQTGRNIYGVDSFSLTSVSGTTATLLQERASERWIQWLGLESDYHCSFSSTRNAEDVVAGEAASSDHHQKISRVTRKRPREPKSTNDILVAGQKLFGSSFEFRDLHQLRLCHEIYMADTPSVAVQAPPGYGKTELFHLPLIALASKGDVKYVSFLFVPYTVLLANCMIRLSRCGCLNVAPVRNFIEEGCDGVTDLYVGIYDDLASTNFTDRIAAWENIVECTFRTNNVKLGYLIVDEFHNFETEVYRQSQFGGITNLDFDAFEKAIFLSGTAPEAVADAALQRIGLTGLAKKSMDINELKRSEDLSRGLSSYPTRMFNLIKEKSEVPLGHVHKIWKKVESQPEEALKLLLALFEIEPESKAIVVASTTNEVEELACSWRKYFRVVWIHGKLGAAEKVSRTKEFVTDGSMRVLIGTKLVTEGIDIKQLMMVIMLDNRLNIIELIQGVGRLRDGGLCYLLSRKNSWAARNRKGELPPIKEGCITEQVREFYGLESKKGKKGQHVGCCGSRTDLSADTVELIERMDRLAEKQATASMSIVALPSSFQESNSSDRCRKYCSSDEDSDTCIHGSANASTNATTNSSTNATTTASTNVRTSATTTASINVRTSATTTESTNSSTNATTTASTNVRTSATTTASINVRTSATTTESTNSNTSATTTESTDSNTSATTTESTDSNTSATTTASTNSSTNATTTASTNSSTNATTTESTNASAKEDANKDGNAEDNRFHPVTDINKESYKRKGSQMVLLERKKLKAQFPNTSENMNVLQFLGFRSDEIKHLFLYGIDVYFCPEGVFTQYGLCKGCQKMFELCVCWAGQKVSYRRMAWEALAVERMLRNDEEYKEYLEDIEPYHGDPVGYLKFFSVKRGEIYSQIQRNYAWYLAITRRRETISVLDSTRGKQGSQVFRMSGRQIKELYYKVWSNLRESKTEVLQYFLNWDEKKCREEWEAKDDTVFVEALEKVGVFQRLRSMTSAGLQGPQYVKLQFSRHHRQLRSRYELSLGMHLRDQLALGVTPSKVPHWTAFLSMLIGLFCNKTFRQKLEYLLEQISEVWLLPHWLDLANVEVLAADNTRVPLYMLMVAVHKELDSDDVPDGRFDILLCRDSSREVGE.

In terms of domain architecture, Helicase ATP-binding spans 861–1038 (EIYMADTPSV…LQRIGLTGLA (178 aa)). An ATP-binding site is contributed by 874–881 (APPGYGKT). Residues 1095–1244 (KLLLALFEIE…EFYGLESKKG (150 aa)) form the Helicase C-terminal domain. A compositionally biased stretch (low complexity) spans 1318–1461 (ANASTNATTN…ATTTESTNAS (144 aa)). The tract at residues 1318-1485 (ANASTNATTN…RFHPVTDINK (168 aa)) is disordered. Residues 1462 to 1485 (AKEDANKDGNAEDNRFHPVTDINK) show a composition bias toward basic and acidic residues.

The protein belongs to the helicase family. Yeast subtelomeric Y' repeat subfamily.

Functionally, catalyzes DNA unwinding and is involved in telomerase-independent telomere maintenance. The protein is Y' element ATP-dependent helicase protein 1 copy 6 (YRF1-6) of Saccharomyces cerevisiae (strain ATCC 204508 / S288c) (Baker's yeast).